We begin with the raw amino-acid sequence, 60 residues long: Large ribosomal subunit protein uL30 (60 aa).

This sequence belongs to the universal ribosomal protein uL30 family. In terms of assembly, part of the 50S ribosomal subunit.

The sequence is that of Large ribosomal subunit protein uL30 from Syntrophobacter fumaroxidans (strain DSM 10017 / MPOB).